The primary structure comprises 342 residues: Phosphate acyltransferase (342 aa).

It belongs to the PlsX family. As to quaternary structure, homodimer. Probably interacts with PlsY.

The protein localises to the cytoplasm. The catalysed reaction is a fatty acyl-[ACP] + phosphate = an acyl phosphate + holo-[ACP]. It participates in lipid metabolism; phospholipid metabolism. Functionally, catalyzes the reversible formation of acyl-phosphate (acyl-PO(4)) from acyl-[acyl-carrier-protein] (acyl-ACP). This enzyme utilizes acyl-ACP as fatty acyl donor, but not acyl-CoA. This is Phosphate acyltransferase from Leuconostoc mesenteroides subsp. mesenteroides (strain ATCC 8293 / DSM 20343 / BCRC 11652 / CCM 1803 / JCM 6124 / NCDO 523 / NBRC 100496 / NCIMB 8023 / NCTC 12954 / NRRL B-1118 / 37Y).